Here is a 463-residue protein sequence, read N- to C-terminus: Fumarate hydratase class II (463 aa).

Substrate contacts are provided by residues 98 to 100, 129 to 132, 139 to 141, and Thr-187; these read SGT, HPND, and SSN. The Proton donor/acceptor role is filled by His-188. Residue Ser-318 is part of the active site. Residues Ser-319 and 324-326 contribute to the substrate site; that span reads KVN.

This sequence belongs to the class-II fumarase/aspartase family. Fumarase subfamily. As to quaternary structure, homotetramer.

It is found in the cytoplasm. The catalysed reaction is (S)-malate = fumarate + H2O. Its pathway is carbohydrate metabolism; tricarboxylic acid cycle; (S)-malate from fumarate: step 1/1. In terms of biological role, involved in the TCA cycle. Catalyzes the stereospecific interconversion of fumarate to L-malate. This is Fumarate hydratase class II from Brucella melitensis biotype 1 (strain ATCC 23456 / CCUG 17765 / NCTC 10094 / 16M).